Reading from the N-terminus, the 596-residue chain is Phosphomethylpyrimidine synthase 1 (596 aa).

Substrate-binding positions include Asn228, Met257, Tyr286, His322, 342–344, 383–386, and Glu422; these read SRG and DGLR. Position 426 (His426) interacts with Zn(2+). Tyr449 is a substrate binding site. Zn(2+) is bound at residue His490. 3 residues coordinate [4Fe-4S] cluster: Cys570, Cys573, and Cys578.

Belongs to the ThiC family. In terms of assembly, homodimer. [4Fe-4S] cluster is required as a cofactor.

The catalysed reaction is 5-amino-1-(5-phospho-beta-D-ribosyl)imidazole + S-adenosyl-L-methionine = 4-amino-2-methyl-5-(phosphooxymethyl)pyrimidine + CO + 5'-deoxyadenosine + formate + L-methionine + 3 H(+). The protein operates within cofactor biosynthesis; thiamine diphosphate biosynthesis. Its function is as follows. Catalyzes the synthesis of the hydroxymethylpyrimidine phosphate (HMP-P) moiety of thiamine from aminoimidazole ribotide (AIR) in a radical S-adenosyl-L-methionine (SAM)-dependent reaction. This chain is Phosphomethylpyrimidine synthase 1, found in Syntrophotalea carbinolica (strain DSM 2380 / NBRC 103641 / GraBd1) (Pelobacter carbinolicus).